We begin with the raw amino-acid sequence, 757 residues long: MSGNNLSGNDEFDEQLRMQELYGGDPKEGDTQNEPSGEAHSLGQPPDDTPYEWDLDKKAWFPKITEDFIATYQANYGFSSDGASSSTANVQDANTKAVEEPPQKEVPETPDSKRKGEKRKAESGWFHVEEDRNTNVYVSGLPPDITVDEFIQLMSKFGIIMRDPQTEEFKVKLYKDDQGNLKGDGLCCYLKKESVELALKLLDEDEIRGYKLHVEVAKFQLKGEYDASKKKKKCKDYKKKLSLQQKQLDWRPERRAGPNRLRHERVVILKNMFHPMDFEDDPLVLNEIREDLRVECSKFGQIRKLLLFDRHPDGVASVSFREPEEADHCIQTLDGRWFGGRQITAQAWDGTTDYQVEETSREREERLRGWEAFLNAPEASRGLRRMDSIAGSERPGPSRMRHFSEHPSMSNMKAQEATTGMAFEETIDENKFEKAEEGGESEGDASEKDAKEGGSDGDHPEREGGEGCSKKENEEGCPERALEPEEGNPQTEAQENGPEREARKKSKMDYEKNGFSKESEDNDLGKESEGEDSLKKESEDDDSEEESEEDSSEKQSQDGSDKEIEENGVKKDVDQDVSDKEFPEDVEKESEENETDKSEFDEGSERVLDEEGSEREFEEDSDEKEEEGDDDEEEVVYERVFDDDSDDIEEEEEADEKECEDADDKEEDNDIDEKLFDDSDEKEDEEDTDGKKDDDASDKVFEDNSNEKLFDEEEGPNEKLFDDSDERGTVGNVKEDGSQSTDSSFALSSSDDDDDEV.

Disordered regions lie at residues 1 to 54 (MSGN…YEWD) and 80 to 123 (SDGA…KAES). Ser2 is modified (N-acetylserine). A compositionally biased stretch (polar residues) spans 80–94 (SDGASSSTANVQDAN). The segment covering 97-123 (AVEEPPQKEVPETPDSKRKGEKRKAES) has biased composition (basic and acidic residues). RRM domains follow at residues 134–219 (TNVY…VAKF) and 265–350 (RVVI…AWDG). The tract at residues 260–354 (RLRHERVVIL…AQAWDGTTDY (95 aa)) is U2AF homology motif (UHM). Lys298 bears the N6-acetyllysine mark. The mediates interaction with the P-TEFb complex stretch occupies residues 382–757 (GLRRMDSIAG…SSSDDDDDEV (376 aa)). The tract at residues 383-417 (LRRMDSIAGSERPGPSRMRHFSEHPSMSNMKAQEA) is disordered. Phosphoserine occurs at positions 388, 404, 408, and 410. A compositionally biased stretch (polar residues) spans 407-417 (PSMSNMKAQEA). Residue Lys431 forms a Glycyl lysine isopeptide (Lys-Gly) (interchain with G-Cter in SUMO2) linkage. The tract at residues 432 to 757 (FEKAEEGGES…SSSDDDDDEV (326 aa)) is disordered. 4 positions are modified to phosphoserine: Ser441, Ser446, Ser519, and Ser528. Basic and acidic residues-rich tracts occupy residues 445-483 (ASEK…RALE) and 497-538 (GPER…KKES). Residues 539–551 (EDDDSEEESEEDS) show a composition bias toward acidic residues. Basic and acidic residues-rich tracts occupy residues 552-585 (SEKQ…FPED) and 595-609 (TDKS…RVLD). A phosphoserine mark is found at Ser556, Ser560, Ser578, Ser598, Ser604, Ser613, Ser621, Ser645, Ser679, Ser705, Ser724, and Ser749. Acidic residues-rich tracts occupy residues 610 to 635 (EEGS…EEEV), 643 to 671 (DDSD…DNDI), and 678 to 688 (DSDEKEDEEDT). Basic and acidic residues-rich tracts occupy residues 689 to 709 (DGKK…NEKL) and 716 to 737 (PNEK…KEDG). Residues 738-749 (SQSTDSSFALSS) show a composition bias toward low complexity.

This sequence belongs to the HTATSF1 family. As to quaternary structure, component of the 17S U2 SnRNP complex, a ribonucleoprotein complex that contains small nuclear RNA (snRNA) U2 and a number of specific proteins. Within the 17S U2 SnRNP complex, interacts (via UHM region) directly with SF3B1. Component of a complex which is at least composed of HTATSF1/Tat-SF1, the P-TEFb complex components CDK9 and CCNT1, RNA polymerase II, SUPT5H, and NCL/nucleolin. Interacts with GTF2F2/RAP30 and POLR2A. Interacts with TCERG1/CA150. Interacts with (poly-ADP-ribosylated) RPA1; promoting HTATSF1 recruitment to DNA damage sites. Interacts (when phosphorylated) with TOPBP1; promoting recruitment of TOPBP1 to DNA damage sites during S-phase. In terms of processing, phosphorylation at Ser-749 by CK2 during S-phase in response to DNA damage promotes interaction with TOPBP1 and double-strand break (DSB) repair via homologous recombination.

It is found in the nucleus. The protein resides in the chromosome. Its function is as follows. Component of the 17S U2 SnRNP complex of the spliceosome, a large ribonucleoprotein complex that removes introns from transcribed pre-mRNAs. The 17S U2 SnRNP complex (1) directly participates in early spliceosome assembly and (2) mediates recognition of the intron branch site during pre-mRNA splicing by promoting the selection of the pre-mRNA branch-site adenosine, the nucleophile for the first step of splicing. Within the 17S U2 SnRNP complex, HTATSF1 is required to stabilize the branchpoint-interacting stem loop. HTATSF1 is displaced from the 17S U2 SnRNP complex before the stable addition of the 17S U2 SnRNP complex to the spliceosome, destabilizing the branchpoint-interacting stem loop and allowing to probe intron branch site sequences. Also acts as a regulator of transcriptional elongation, possibly by mediating the reciprocal stimulatory effect of splicing on transcriptional elongation. Involved in double-strand break (DSB) repair via homologous recombination in S-phase by promoting the recruitment of TOPBP1 to DNA damage sites. Mechanistically, HTATSF1 is (1) recruited to DNA damage sites in S-phase via interaction with poly-ADP-ribosylated RPA1 and (2) phosphorylated by CK2, promoting recruitment of TOPBP1, thereby facilitating RAD51 nucleofilaments formation and RPA displacement, followed by homologous recombination. The protein is 17S U2 SnRNP complex component HTATSF1 (Htatsf1) of Mus musculus (Mouse).